A 455-amino-acid polypeptide reads, in one-letter code: Phosphomethylpyrimidine synthase (455 aa).

Residues Asn-80, Met-109, Tyr-139, His-175, 195–197 (SRG), 236–239 (DALR), and Glu-275 contribute to the substrate site. His-279 provides a ligand contact to Zn(2+). Tyr-302 serves as a coordination point for substrate. His-343 is a binding site for Zn(2+). Residues Cys-423, Cys-426, and Cys-431 each contribute to the [4Fe-4S] cluster site.

It belongs to the ThiC family. Requires [4Fe-4S] cluster as cofactor.

The catalysed reaction is 5-amino-1-(5-phospho-beta-D-ribosyl)imidazole + S-adenosyl-L-methionine = 4-amino-2-methyl-5-(phosphooxymethyl)pyrimidine + CO + 5'-deoxyadenosine + formate + L-methionine + 3 H(+). The protein operates within cofactor biosynthesis; thiamine diphosphate biosynthesis. Catalyzes the synthesis of the hydroxymethylpyrimidine phosphate (HMP-P) moiety of thiamine from aminoimidazole ribotide (AIR) in a radical S-adenosyl-L-methionine (SAM)-dependent reaction. The sequence is that of Phosphomethylpyrimidine synthase from Synechococcus sp. (strain JA-3-3Ab) (Cyanobacteria bacterium Yellowstone A-Prime).